A 447-amino-acid polypeptide reads, in one-letter code: Glucose-6-phosphate isomerase (447 aa).

Glu-287 acts as the Proton donor in catalysis. Catalysis depends on residues His-308 and Lys-422.

The protein belongs to the GPI family.

Its subcellular location is the cytoplasm. It catalyses the reaction alpha-D-glucose 6-phosphate = beta-D-fructose 6-phosphate. It functions in the pathway carbohydrate biosynthesis; gluconeogenesis. It participates in carbohydrate degradation; glycolysis; D-glyceraldehyde 3-phosphate and glycerone phosphate from D-glucose: step 2/4. Functionally, catalyzes the reversible isomerization of glucose-6-phosphate to fructose-6-phosphate. This Heliobacterium modesticaldum (strain ATCC 51547 / Ice1) protein is Glucose-6-phosphate isomerase.